Reading from the N-terminus, the 863-residue chain is MTIRKNSGLVPINIQLYKTTPIQTILQAEQQDRFLQPAELSQLLSYMKSGVLRLEIAETLSRNSTNIVNAASNRIFVGGSPLSYLEKPEDSIDISSIDTKNTKFSFSNIFKNLFSNEDSIPAGFKPITIVKYGSNKMRKSLRDLDWFLRYLSYAIIIGDPNILAVNIKGLREIIENACSTAATIVALRTMKRTCIKLFSSNPEAESIVNQYFNVIIQEFEAPSLSDRIRKRNSADLQGLTLPQTYFLSSSTQFKYAMKPNLSVEEKNEIIRAAYRQVFERDIVKAYSLSLTKMESRVKIGQISMKEFIRALGKSSLYRKEFFDSFSNSRVVELAFRHFLGRGISSLEEFQKYFAIVSQEGLGGLVDTLINSKEYSDYFGEETVPYLRSLGEEAQECRNWGVQIKLFNYSARFQKKPQFITLFKDYQTPLPDQHPYGHSNDPLAIQFGAIFSKKTSTAFVNKDVRRILIYKGAPIENQLSRPLKLNAYKELNSYNLQIIKQSDNLTENIIRACYLRVFGRNPYTEEKLILQPIENQFRDKCISIKELIRALSKSNLFRKLYWTPFYVCKSIEYIHIRLLGRPTYGRKEINNYFNISAQGGFYKLIDAIIDSEEYSQVFGDNIIPYERYLTPYNLSLGTLRVSSIREKFKKLQPPVDKKFVELGRVKEIRSKNNIILKLNQGVSKRREQTVIFARHINNSQSSLEQIIKAAYRQVFERDIDPYTIGREFYSIETLFYAGSLSVKEFIEHLGQSELYRKEFFEPYPNTKVIELGTKHFLGRAPKDQGEIRLYNQILRSQGLKSFVKSLINSQEYIEIFGDSIVPYRRFPTLPAGTFPNTDILYKNLTKQKFFILMPSYKNTKLLSV.

Cys178 contacts (2R,3E)-phycocyanobilin. 3 PBS-linker domains span residues 235–414 (DLQG…RFQK), 473–652 (PIEN…KLQP), and 671–852 (NNII…FILM).

Belongs to the phycobilisome linker protein family. Post-translationally, contains one covalently linked bilin chromophore. This protein autochromophorylates (Potential).

The protein resides in the plastid. It localises to the chloroplast thylakoid membrane. Functionally, this protein is postulated to act both as terminal energy acceptor and as a linker polypeptide that stabilizes the phycobilisome architecture. May have intrinsic bilin lyase activity. The sequence is that of Phycobiliprotein ApcE (apcE) from Galdieria sulphuraria (Red alga).